Consider the following 683-residue polypeptide: 1,4-alpha-glucan-branching enzyme (683 aa).

(1,4-alpha-D-glucosyl)n contacts are provided by tryptophan 92 and lysine 127. Aspartate 342 serves as the catalytic Nucleophile. Glutamate 397 functions as the Proton donor in the catalytic mechanism.

Belongs to the glycosyl hydrolase 13 family. GlgB subfamily.

The protein resides in the cytoplasm. The catalysed reaction is Transfers a segment of a (1-&gt;4)-alpha-D-glucan chain to a primary hydroxy group in a similar glucan chain.. Its pathway is glycan biosynthesis; glycogen biosynthesis. Its function is as follows. Glycogen-branching enzyme participates in the glycogen biosynthetic process along with glycogenin and glycogen synthase. Generates alpha-1,6-glucosidic branches from alpha-1,4-linked glucose chains, to increase solubility of the glycogen polymer. This Rhizophagus irregularis (strain DAOM 181602 / DAOM 197198 / MUCL 43194) (Arbuscular mycorrhizal fungus) protein is 1,4-alpha-glucan-branching enzyme (GLC3).